The following is a 543-amino-acid chain: CTP synthase (543 aa).

Residues 1–265 are amidoligase domain; sequence MARYIFITGG…DDEVLAAFAI (265 aa). Serine 13 contributes to the CTP binding site. Serine 13 lines the UTP pocket. Residue 14-19 coordinates ATP; sequence SLGKGL. Tyrosine 54 is an L-glutamine binding site. Aspartate 71 serves as a coordination point for ATP. Positions 71 and 139 each coordinate Mg(2+). Residues 146 to 148, 186 to 191, and lysine 222 each bind CTP; these read DIE and KTKPTQ. Residues 186–191 and lysine 222 contribute to the UTP site; that span reads KTKPTQ. 238 to 240 contacts ATP; that stretch reads RDA. One can recognise a Glutamine amidotransferase type-1 domain in the interval 291-542; sequence TIAIVGKYTG…IEAALVRSRL (252 aa). Glycine 353 is an L-glutamine binding site. Cysteine 380 (nucleophile; for glutamine hydrolysis) is an active-site residue. Residues 381 to 384, glutamate 404, and arginine 470 each bind L-glutamine; that span reads FGMQ. Catalysis depends on residues histidine 515 and glutamate 517.

It belongs to the CTP synthase family. As to quaternary structure, homotetramer.

The enzyme catalyses UTP + L-glutamine + ATP + H2O = CTP + L-glutamate + ADP + phosphate + 2 H(+). It catalyses the reaction L-glutamine + H2O = L-glutamate + NH4(+). The catalysed reaction is UTP + NH4(+) + ATP = CTP + ADP + phosphate + 2 H(+). The protein operates within pyrimidine metabolism; CTP biosynthesis via de novo pathway; CTP from UDP: step 2/2. Allosterically activated by GTP, when glutamine is the substrate; GTP has no effect on the reaction when ammonia is the substrate. The allosteric effector GTP functions by stabilizing the protein conformation that binds the tetrahedral intermediate(s) formed during glutamine hydrolysis. Inhibited by the product CTP, via allosteric rather than competitive inhibition. Its function is as follows. Catalyzes the ATP-dependent amination of UTP to CTP with either L-glutamine or ammonia as the source of nitrogen. Regulates intracellular CTP levels through interactions with the four ribonucleotide triphosphates. The sequence is that of CTP synthase from Rhodopseudomonas palustris (strain HaA2).